The chain runs to 185 residues: Ribose 1,5-bisphosphate phosphokinase PhnN (185 aa).

10-17 (GPSGSGKD) contacts ATP.

Belongs to the ribose 1,5-bisphosphokinase family.

It catalyses the reaction alpha-D-ribose 1,5-bisphosphate + ATP = 5-phospho-alpha-D-ribose 1-diphosphate + ADP. Its pathway is metabolic intermediate biosynthesis; 5-phospho-alpha-D-ribose 1-diphosphate biosynthesis; 5-phospho-alpha-D-ribose 1-diphosphate from D-ribose 5-phosphate (route II): step 3/3. Catalyzes the phosphorylation of ribose 1,5-bisphosphate to 5-phospho-D-ribosyl alpha-1-diphosphate (PRPP). The chain is Ribose 1,5-bisphosphate phosphokinase PhnN from Shigella dysenteriae serotype 1 (strain Sd197).